The following is a 473-amino-acid chain: MKTLYSLRRYYPVETLFNGTLALGGRDQETTGFAWWAGNARLINLSGKLLGAHVAHAGLIVFWAGAMNLFEVAHFVPEKPMYEQGLILLPHLATLGWGVGPGGEVIDTFPYFVSGVLHLISSAVLGFGGIYHSLIGPETLEESFPFFGYVWKDKNKMTTILGIHLVLLGLGAFLLVFKASFFGGVYDTWAPGGGDVREITNLTLSPSIIFGYLLKSPFGGEGWIVSVDNLEDIIGGHVWLGLICILGGIWHILTKPFAWARRALVWSGEAYLSYSLGAISVFGFIACCFVWFNNTAYPSEFYGPTGPEASQAQAFTFLVRDQRLGANVGSAQGPTGLGKYLMRSPTGEIIFGGETMRFWDLRAPWLEPLRGPNGLDLSKLKQDIQPWQERRSAEYMTHAPLGSLNSVGGVATEINAVNYVSPRSWLATSHFVLGFFFFVGHLWHAGRARAAAAGFEKGIDRDSEPVLSMTPLN.

Residues 1–14 (MKTLYSLRRYYPVE) constitute a propeptide that is removed on maturation. Thr-15 is subject to N-acetylthreonine. Thr-15 is modified (phosphothreonine). A run of 5 helical transmembrane segments spans residues 69–93 (LFEV…PHLA), 134–155 (LIGP…KDKN), 178–200 (KASF…REIT), 255–275 (KPFA…LSYS), and 291–312 (WFNN…ASQA). A [CaMn4O5] cluster-binding site is contributed by Glu-367. A helical membrane pass occupies residues 447 to 471 (RARAAAAGFEKGIDRDSEPVLSMTP).

This sequence belongs to the PsbB/PsbC family. PsbC subfamily. In terms of assembly, PSII is composed of 1 copy each of membrane proteins PsbA, PsbB, PsbC, PsbD, PsbE, PsbF, PsbH, PsbI, PsbJ, PsbK, PsbL, PsbM, PsbT, PsbX, PsbY, PsbZ, Psb30/Ycf12, at least 3 peripheral proteins of the oxygen-evolving complex and a large number of cofactors. It forms dimeric complexes. Requires Binds multiple chlorophylls and provides some of the ligands for the Ca-4Mn-5O cluster of the oxygen-evolving complex. It may also provide a ligand for a Cl- that is required for oxygen evolution. PSII binds additional chlorophylls, carotenoids and specific lipids. as cofactor.

Its subcellular location is the plastid. It is found in the chloroplast thylakoid membrane. Functionally, one of the components of the core complex of photosystem II (PSII). It binds chlorophyll and helps catalyze the primary light-induced photochemical processes of PSII. PSII is a light-driven water:plastoquinone oxidoreductase, using light energy to abstract electrons from H(2)O, generating O(2) and a proton gradient subsequently used for ATP formation. This Anthoceros angustus (Hornwort) protein is Photosystem II CP43 reaction center protein.